The primary structure comprises 249 residues: Cell division protein FtsQ (249 aa).

The Cytoplasmic segment spans residues 1 to 6 (MKFILF). A helical membrane pass occupies residues 7-23 (ALLVSAGSWYGWKQLHS). At 24–249 (QDAVSKPIRY…YKNVMKERRI (226 aa)) the chain is on the periplasmic side. The 70-residue stretch at 29–98 (KPIRYVKIEG…DAVHIKITEQ (70 aa)) folds into the POTRA domain.

This sequence belongs to the FtsQ/DivIB family. FtsQ subfamily. As to quaternary structure, part of a complex composed of FtsB, FtsL and FtsQ.

The protein localises to the cell inner membrane. Functionally, essential cell division protein. May link together the upstream cell division proteins, which are predominantly cytoplasmic, with the downstream cell division proteins, which are predominantly periplasmic. May control correct divisome assembly. The polypeptide is Cell division protein FtsQ (Methylomonas methanica (strain DSM 25384 / MC09)).